A 359-amino-acid chain; its full sequence is Dihydroorotate dehydrogenase (quinone) (359 aa).

FMN contacts are provided by residues 65 to 69 and Thr89; that span reads AGLDK. Lys69 is a substrate binding site. Residue 114-118 participates in substrate binding; it reads NRLGF. Positions 149 and 182 each coordinate FMN. Asn182 contacts substrate. Ser185 (nucleophile) is an active-site residue. Asn187 contacts substrate. Lys233 and Thr261 together coordinate FMN. 262 to 263 is a substrate binding site; that stretch reads NT. FMN contacts are provided by residues Gly284, Gly313, and 334 to 335; that span reads YT.

The protein belongs to the dihydroorotate dehydrogenase family. Type 2 subfamily. Monomer. The cofactor is FMN.

The protein resides in the cell membrane. The enzyme catalyses (S)-dihydroorotate + a quinone = orotate + a quinol. It functions in the pathway pyrimidine metabolism; UMP biosynthesis via de novo pathway; orotate from (S)-dihydroorotate (quinone route): step 1/1. Its function is as follows. Catalyzes the conversion of dihydroorotate to orotate with quinone as electron acceptor. The sequence is that of Dihydroorotate dehydrogenase (quinone) from Paracidovorax citrulli (strain AAC00-1) (Acidovorax citrulli).